Consider the following 180-residue polypeptide: NAD(P)H-quinone oxidoreductase subunit I, chloroplastic (180 aa).

4Fe-4S ferredoxin-type domains are found at residues 55 to 84 and 95 to 124; these read GRIH…VNWR and LNYS…MTEE. Residues Cys-64, Cys-67, Cys-70, Cys-74, Cys-104, Cys-107, Cys-110, and Cys-114 each coordinate [4Fe-4S] cluster.

This sequence belongs to the complex I 23 kDa subunit family. As to quaternary structure, NDH is composed of at least 16 different subunits, 5 of which are encoded in the nucleus. Requires [4Fe-4S] cluster as cofactor.

Its subcellular location is the plastid. It is found in the chloroplast thylakoid membrane. It carries out the reaction a plastoquinone + NADH + (n+1) H(+)(in) = a plastoquinol + NAD(+) + n H(+)(out). The enzyme catalyses a plastoquinone + NADPH + (n+1) H(+)(in) = a plastoquinol + NADP(+) + n H(+)(out). Functionally, NDH shuttles electrons from NAD(P)H:plastoquinone, via FMN and iron-sulfur (Fe-S) centers, to quinones in the photosynthetic chain and possibly in a chloroplast respiratory chain. The immediate electron acceptor for the enzyme in this species is believed to be plastoquinone. Couples the redox reaction to proton translocation, and thus conserves the redox energy in a proton gradient. The sequence is that of NAD(P)H-quinone oxidoreductase subunit I, chloroplastic from Platanus occidentalis (Sycamore).